The following is an 824-amino-acid chain: Fibroblast growth factor receptor 2 (824 aa).

Residues 1-21 form the signal peptide; sequence MFSWSYLMGLVMVATATLSLA. Residues 22 to 374 are Extracellular-facing; it reads RPSYNIAEDT…LDSSSSEYTE (353 aa). An Ig-like C2-type 1 domain is found at 25–125; that stretch reads YNIAEDTTLE…ETRYFIVNIT (101 aa). A disulfide bond links cysteine 62 and cysteine 107. N-linked (GlcNAc...) asparagine glycosylation is found at asparagine 83, asparagine 123, and asparagine 128. A disordered region spans residues 125–152; the sequence is TDGNSSGDDEDDNDGSEDFTNDNNHKRA. Positions 131–144 are enriched in acidic residues; the sequence is GDDEDDNDGSEDFT. Ig-like C2-type domains follow at residues 153–246 and 254–356; these read PYWT…YHLD and PPIL…AWLT. Residues 160-177 form a heparin-binding region; sequence KLEKKLHAVPAANTVKFR. An intrachain disulfide couples cysteine 178 to cysteine 230. Asparagine 227, asparagine 240, asparagine 264, asparagine 295, asparagine 316, and asparagine 329 each carry an N-linked (GlcNAc...) asparagine glycan. Cysteine 277 and cysteine 340 are disulfide-bonded. The chain crosses the membrane as a helical span at residues 375-395; the sequence is IAIYCVGGFLIACMIGTIMMC. Topologically, residues 396 to 824 are cytoplasmic; the sequence is HMKGRGKKSD…PLKHEATQPA (429 aa). Tyrosine 463 carries the post-translational modification Phosphotyrosine; by autocatalysis. The region spanning 478–767 is the Protein kinase domain; that stretch reads LTLGKPLGEG…LTQTTNEEYL (290 aa). ATP-binding positions include 484 to 492, lysine 514, 562 to 564, and asparagine 568; these read LGEGCFGQV and EYA. Tyrosine 583 carries the post-translational modification Phosphotyrosine; by autocatalysis. The Proton acceptor role is filled by aspartate 623. 3 positions are modified to phosphotyrosine; by autocatalysis: tyrosine 653, tyrosine 654, and tyrosine 766. A disordered region spans residues 801–824; it reads SMNLAFPNPNTQMAPLKHEATQPA.

Belongs to the protein kinase superfamily. Tyr protein kinase family. Fibroblast growth factor receptor subfamily. Monomer. Homodimer after ligand binding. In terms of processing, autophosphorylated. Binding of FGF family members together with heparan sulfate proteoglycan or heparin promotes receptor dimerization and autophosphorylation on tyrosine residues. Autophosphorylation occurs in trans between the two FGFR molecules present in the dimer. N-glycosylated in the endoplasmic reticulum. The N-glycan chains undergo further maturation to an Endo H-resistant form in the Golgi apparatus. Post-translationally, ubiquitinated. FGFR2 is rapidly ubiquitinated after autophosphorylation, leading to internalization and degradation. Subject to degradation both in lysosomes and by the proteasome.

Its subcellular location is the cell membrane. It localises to the golgi apparatus. The protein localises to the cytoplasmic vesicle. It catalyses the reaction L-tyrosyl-[protein] + ATP = O-phospho-L-tyrosyl-[protein] + ADP + H(+). With respect to regulation, present in an inactive conformation in the absence of bound ligand. Ligand binding leads to dimerization and activation by autophosphorylation on tyrosine residues. In terms of biological role, tyrosine-protein kinase that acts as a cell-surface receptor for fibroblast growth factors and plays an essential role in the regulation of cell proliferation, differentiation, migration and apoptosis, and in the regulation of embryonic development. Required for normal embryonic patterning, limb bud development, lung morphogenesis, osteogenesis and skin development. Plays an essential role in the regulation of osteoblast differentiation, proliferation and apoptosis, and is required for normal skeleton development. Promotes cell proliferation in keratinocytes and immature osteoblasts, but promotes apoptosis in differentiated osteoblasts. Phosphorylates PLCG1, FRS2 and PAK4. Ligand binding leads to the activation of several signaling cascades. Activation of PLCG1 leads to the production of the cellular signaling molecules diacylglycerol and inositol 1,4,5-trisphosphate. Phosphorylation of FRS2 triggers recruitment of GRB2, GAB1, PIK3R1 and SOS1, and mediates activation of RAS, MAPK1/ERK2, MAPK3/ERK1 and the MAP kinase signaling pathway, as well as of the AKT1 signaling pathway. FGFR2 signaling is down-regulated by ubiquitination, internalization and degradation. Mutations that lead to constitutive kinase activation or impair normal FGFR2 maturation, internalization and degradation lead to aberrant signaling. Over-expressed FGFR2 promotes activation of STAT1. The polypeptide is Fibroblast growth factor receptor 2 (FGFR2) (Pleurodeles waltl (Iberian ribbed newt)).